We begin with the raw amino-acid sequence, 92 residues long: Small archaeal modifier protein 3 (92 aa).

Glycyl lysine isopeptide (Lys-Gly) (interchain with G-Cter in SAMP3) cross-links involve residues Lys18, Lys55, and Lys62. Gly92 is subject to Glycyl adenylate; alternate. Residue Gly92 forms a Glycyl lysine isopeptide (Gly-Lys) (interchain with K-? in acceptor proteins); alternate linkage.

As to quaternary structure, monomer. In terms of processing, the C-terminal glycine is likely acyl-adenylated (-COAMP) by UbaA.

Its function is as follows. Functions as a protein modifier covalently attached to lysine residues of substrate proteins. The protein modification process is termed sampylation and involves the formation of an isopeptide bond between the SAMP3 C-terminal glycine carboxylate and the epsilon-amino group of lysine residues on target proteins. Seems to be able to form polymeric chains with itself at Lys-18, Lys-55 and Lys-62, similar to ubiquitin and other ubiquitin-like proteins. SAMP3 appears not to serve as a proteolytic signal in the cell to target proteins for degradation by proteasomes. May regulate molybdenum cofactor (MoCo) biosynthesis by inhibiting the activity of MPT synthase MoaE under aerobic conditions, providing a hierarchy of oxygen use prior to that of alternative electron acceptors such as DMSO. This is Small archaeal modifier protein 3 (samp3) from Haloferax volcanii (strain ATCC 29605 / DSM 3757 / JCM 8879 / NBRC 14742 / NCIMB 2012 / VKM B-1768 / DS2) (Halobacterium volcanii).